A 317-amino-acid polypeptide reads, in one-letter code: Olfactory receptor 10A5 (317 aa).

The Extracellular segment spans residues 1 to 26 (MAIGNWTEISEFILMSFSSLPTEIQS). N-linked (GlcNAc...) asparagine glycosylation occurs at asparagine 5. Residues 27-47 (LLFLTFLTIYLVTLKGNSLII) form a helical membrane-spanning segment. The Cytoplasmic segment spans residues 48-55 (LVTLADPM). The helical transmembrane segment at 56-76 (LHSPMYFFLRNLSFLEIGFNL) threads the bilayer. The Extracellular segment spans residues 77 to 100 (VIVPKMLGTLLAQDTTISFLGCAT). The cysteines at positions 98 and 190 are disulfide-linked. Residues 101-121 (QMYFFFFFGVAECFLLATMAY) traverse the membrane as a helical segment. Residues 122 to 140 (DRYVAICSPLHYPVIMNQR) are Cytoplasmic-facing. Residues 141 to 161 (TRAKLAAASWFPGFPVATVQT) traverse the membrane as a helical segment. Residues 162-198 (TWLFSFPFCGTNKVNHFFCDSPPVLKLVCADTALFEI) are Extracellular-facing. Residues 199 to 218 (YAIVGTILVVMIPCLLILCS) form a helical membrane-spanning segment. Residues 219 to 238 (YTRIAAAILKIPSAKGKHKA) lie on the Cytoplasmic side of the membrane. The chain crosses the membrane as a helical span at residues 239 to 259 (FSTCSSHLLVVSLFYISSSLT). Topologically, residues 260–272 (YFWPKSNNSPESK) are extracellular. The helical transmembrane segment at 273-293 (KLLSLSYTVVTPMLNPIIYSL) threads the bilayer. Topologically, residues 294–317 (RNSEVKNALSRTFHKVLALRNCIP) are cytoplasmic.

It belongs to the G-protein coupled receptor 1 family. Expressed in the tongue.

It localises to the cell membrane. Functionally, odorant receptor (Potential). May be involved in taste perception. The polypeptide is Olfactory receptor 10A5 (OR10A5) (Homo sapiens (Human)).